A 107-amino-acid polypeptide reads, in one-letter code: U1-lycotoxin-Ls1b (107 aa).

The signal sequence occupies residues 1-20 (MMKVLVVFALLVTLISYSSS). The propeptide occupies 21–41 (EGIDDLEADELLSLMANEQTR). 4 cysteine pairs are disulfide-bonded: Cys-44-Cys-59, Cys-51-Cys-68, Cys-58-Cys-86, and Cys-70-Cys-84.

This sequence belongs to the neurotoxin 19 (CSTX) family. 04 (U1-Lctx) subfamily. As to expression, expressed by the venom gland.

Its subcellular location is the secreted. This Lycosa singoriensis (Wolf spider) protein is U1-lycotoxin-Ls1b.